The sequence spans 337 residues: S-adenosylmethionine:tRNA ribosyltransferase-isomerase (337 aa).

Belongs to the QueA family. Monomer.

The protein localises to the cytoplasm. It catalyses the reaction 7-aminomethyl-7-carbaguanosine(34) in tRNA + S-adenosyl-L-methionine = epoxyqueuosine(34) in tRNA + adenine + L-methionine + 2 H(+). It functions in the pathway tRNA modification; tRNA-queuosine biosynthesis. Functionally, transfers and isomerizes the ribose moiety from AdoMet to the 7-aminomethyl group of 7-deazaguanine (preQ1-tRNA) to give epoxyqueuosine (oQ-tRNA). The chain is S-adenosylmethionine:tRNA ribosyltransferase-isomerase from Legionella pneumophila (strain Paris).